Reading from the N-terminus, the 398-residue chain is MMGKETPSLRPVELPIQPVGFQDRYKVIHKICEALEKVAYPRVKLAKFAVSLELKLAKESKTSQLYRFNVGILLRDIVKFKANVYKLKIANKPLVPQKVNGRSHTAPITTKQEVFTRLRELLIDKETLRKNGYILPDVKYEPQQPVSSHVTCVRCGTKFSKEDIMNSVVCKFHPSKKLYDKSTKLEIYPCCGESTSSVSFLRLGCSTQKHHVYKGETYSELCTIANFLTTDLIDGKENVLALDCEMGFTTMGYEMVRLTIVDFFTSKTLYDEIIRPIGEVIDLNTQFSGVREEDILYAKDYEDVMEDVLRADMINRNSILIGHGLENDLNVMRLFHTRILDTAIMYSVGRFKNSLKNLSFEILSRKIQLGEHDSSQDAIAAMDIIKAKNGISITQTDW.

Positions 239-385 (VLALDCEMGF…QDAIAAMDII (147 aa)) constitute an Exonuclease domain.

It belongs to the REXO1/REXO3 family.

Its subcellular location is the cytoplasm. The protein resides in the nucleus. 3' to 5' exoribonuclease required for proper 3' end maturation of MRP RNA and of the U5L snRNA. This Candida glabrata (strain ATCC 2001 / BCRC 20586 / JCM 3761 / NBRC 0622 / NRRL Y-65 / CBS 138) (Yeast) protein is RNA exonuclease 3 (REX3).